Here is a 132-residue protein sequence, read N- to C-terminus: UPF0299 membrane protein YohJ (132 aa).

4 helical membrane-spanning segments follow: residues Ile-7–Phe-27, Leu-31–Ala-51, Gly-63–Met-83, and Phe-93–Trp-113.

Belongs to the UPF0299 family.

It is found in the cell inner membrane. This chain is UPF0299 membrane protein YohJ, found in Salmonella agona (strain SL483).